Consider the following 228-residue polypeptide: Urease accessory protein UreF (228 aa).

The protein belongs to the UreF family. In terms of assembly, ureD, UreF and UreG form a complex that acts as a GTP-hydrolysis-dependent molecular chaperone, activating the urease apoprotein by helping to assemble the nickel containing metallocenter of UreC. The UreE protein probably delivers the nickel.

The protein resides in the cytoplasm. Required for maturation of urease via the functional incorporation of the urease nickel metallocenter. The polypeptide is Urease accessory protein UreF (Prochlorococcus marinus subsp. pastoris (strain CCMP1986 / NIES-2087 / MED4)).